A 248-amino-acid polypeptide reads, in one-letter code: MSTPFYVSPQQAMADRAEYARKGIARGRSLVVLQYADGIVFVGENPSRALHKFSEIYDRIGFAAAGKYNEYENLRIGGVRYADLRGYTYDRDDVTARGLANVYAQTLGTIFSSAAEKPYEVELVVAEVGETPEGDQIYRLPHDGSIVDEHGSVAVGGNAEQISSYLDQRHQDGMSLAEALKLAVQALSRDTNGTQREIPAERLEVAVLDRTRPQQRKFKRIVGRQLDRLLEADGATTEAESSAEEEDE.

The interval 229–248 is disordered; sequence LLEADGATTEAESSAEEEDE.

This sequence belongs to the peptidase T1A family. As to quaternary structure, the 20S proteasome core is composed of 14 alpha and 14 beta subunits that assemble into four stacked heptameric rings, resulting in a barrel-shaped structure. The two inner rings, each composed of seven catalytic beta subunits, are sandwiched by two outer rings, each composed of seven alpha subunits. The catalytic chamber with the active sites is on the inside of the barrel. Has a gated structure, the ends of the cylinder being occluded by the N-termini of the alpha-subunits. Is capped by the proteasome-associated ATPase, ARC.

It is found in the cytoplasm. It participates in protein degradation; proteasomal Pup-dependent pathway. Its activity is regulated as follows. The formation of the proteasomal ATPase ARC-20S proteasome complex, likely via the docking of the C-termini of ARC into the intersubunit pockets in the alpha-rings, may trigger opening of the gate for substrate entry. Interconversion between the open-gate and close-gate conformations leads to a dynamic regulation of the 20S proteasome proteolysis activity. Its function is as follows. Component of the proteasome core, a large protease complex with broad specificity involved in protein degradation. The sequence is that of Proteasome subunit alpha from Streptomyces scabiei (strain 87.22).